The primary structure comprises 119 residues: Ribonuclease P protein component (119 aa).

This sequence belongs to the RnpA family. In terms of assembly, consists of a catalytic RNA component (M1 or rnpB) and a protein subunit.

The catalysed reaction is Endonucleolytic cleavage of RNA, removing 5'-extranucleotides from tRNA precursor.. Functionally, RNaseP catalyzes the removal of the 5'-leader sequence from pre-tRNA to produce the mature 5'-terminus. It can also cleave other RNA substrates such as 4.5S RNA. The protein component plays an auxiliary but essential role in vivo by binding to the 5'-leader sequence and broadening the substrate specificity of the ribozyme. The chain is Ribonuclease P protein component from Serratia proteamaculans (strain 568).